The following is a 114-amino-acid chain: UPF0060 membrane protein GDI3492/Gdia_2889 (114 aa).

4 helical membrane-spanning segments follow: residues Phe-8 to Trp-28, Ala-35 to Val-55, Phe-64 to Gly-84, and Ala-92 to Ala-112.

Belongs to the UPF0060 family.

The protein localises to the cell inner membrane. The polypeptide is UPF0060 membrane protein GDI3492/Gdia_2889 (Gluconacetobacter diazotrophicus (strain ATCC 49037 / DSM 5601 / CCUG 37298 / CIP 103539 / LMG 7603 / PAl5)).